We begin with the raw amino-acid sequence, 110 residues long: Protein OPG154 (110 aa).

Belongs to the orthopoxvirus OPG154 protein family. As to quaternary structure, homohexamers, covalently linked. Interacts with OPG144 and OPG153.

The protein resides in the virion. In terms of biological role, structural protein involved in the envelopment of mature virion (MV) to form the wrapped virion (WV). The wrapping consists of the addition of Golgi membranes to the mature virion. Participates in mature virion (MV) movement within the infected cell. May play an indirect role in MV-cell fusion. In Homo sapiens (Human), this protein is Protein OPG154 (OPG154).